The following is a 524-amino-acid chain: Calcium-dependent protein kinase 1 (524 aa).

The disordered stretch occupies residues 1 to 34 (MGCSQSSNVKDFKTRRSKFTNGNNYGKSGNNKNS). G2 carries the N-myristoyl glycine lipid modification. C3 carries S-palmitoyl cysteine lipidation. Positions 10 to 20 (KDFKTRRSKFT) match the Basic cluster involved in membrane binding motif. Residues S17, S28, and S34 each carry the phosphoserine; by autocatalysis modification. The segment covering 21–32 (NGNNYGKSGNNK) has biased composition (low complexity). The 270-residue stretch at 56–325 (YFKVRKLGSG…AKEALNSKWI (270 aa)) folds into the Protein kinase domain. ATP-binding positions include 62-70 (LGSGAYGEV) and K85. S64 is subject to Phosphoserine; by PKG; by autocatalysis. T100 carries the post-translational modification Phosphothreonine; by autocatalysis. At S118 the chain carries Phosphoserine; by autocatalysis. D191 serves as the catalytic Proton acceptor. A Phosphoserine modification is found at S217. Residue S220 is modified to Phosphoserine; by autocatalysis. T231 carries the post-translational modification Phosphothreonine; by PKG; by autocatalysis. A Phosphoserine; by autocatalysis modification is found at S335. Positions 346 to 353 (NMRKFEGS) match the J domain autoinhibitory motif motif. Residues 346 to 364 (NMRKFEGSQKLAQAAILFI) form a j domain region. The J domain interacts with the EF-hand domains signature appears at 354-364 (QKLAQAAILFI). EF-hand domains follow at residues 372-407 (EERK…LRSF), 416-451 (NVEE…KQIL), 452-487 (FSEE…TSIS), and 488-521 (EQMW…ICDN). Residues D385, N387, D389, Q391, E396, D429, D431, N433, Y435, E440, D465, D467, S469, K471, E476, D499, N501, D503, M505, and E510 each coordinate Ca(2+).

This sequence belongs to the protein kinase superfamily. Ser/Thr protein kinase family. CDPK subfamily. In terms of assembly, monomer. Forms a high molecular weight (250 and 400 kDa) complex. Forms a complex composed of CDPK1, PKA regulatory subunit PKAr and 14-3-3I; the complex is formed in merozoites in response to low extracellular level of K(+) and may play a role in microneme secretion. Interacts (when phosphorylated) with 14-3-3I in a Ca(2+)-independent manner; the interaction does not regulate CDPK1 catalytic activity but is required for merozoite invasion of host erythrocytes. Interacts with PKA regulatory subunit PKAr; in a Ca(2+)-dependent manner. Interacts with SERA5 p50 in the late schizont stage. Interacts with inner membrane complex protein IMC1g in late schizonts. Interacts with rhoptry protein RhopH3 in merozoites. Requires Mg(2+) as cofactor. In terms of processing, myristoylated. Myristoylation, palmitoylation and the basic cluster motif are required for the localization to the parasitophorous vacuole membrane. Post-translationally, palmitoylated. Palmitoylation increases in merozoites in response to low level of extracellular K(+) in the host blood. Myristoylation, palmitoylation and the basic cluster motif are required for the localization to the parasitophorous vacuole membrane. Phosphorylation at Ser-64 occurs at late schizont stage and regulates CDPK1 protein-protein interaction. Phosphorylated at Ser-28, Ser-34 and Ser-64 in merozoites in response to low extracellular level of K(+). Phosphorylation at Thr-231 may regulate CDPK1 kinase activity. Phosphorylation increases in response to an increase in intracellular Ca(2+) levels. Autophosphorylated in vitro. Autophosphorylation does not affect membrane localization in vitro.

Its subcellular location is the membrane. It localises to the cell membrane. It is found in the parasitophorous vacuole membrane. The protein localises to the cytoplasm. The protein resides in the cell projection. Its subcellular location is the cilium. It localises to the flagellum. It is found in the host cell membrane. The enzyme catalyses L-seryl-[protein] + ATP = O-phospho-L-seryl-[protein] + ADP + H(+). The catalysed reaction is L-threonyl-[protein] + ATP = O-phospho-L-threonyl-[protein] + ADP + H(+). Activated by calcium. Upon calcium binding to the EF-hand domains, the C-terminus of the junction domain (J domain) undergoes a conformational change which results in the dissociation of the pseudo-substrate inhibitory motif from the catalytic domain. This, in turn may facilitate the autophosphorylation of the activation loop at Thr-231, which leads to the kinase activation. May be negatively regulated by PKA-mediated phosphorylation. Inhibited by purfalcamine. In terms of biological role, calcium-dependent protein kinase which acts as a sensor and effector of intracellular Ca(2+) levels probably in part downstream of cGMP-activated PKG kinase. By phosphorylating various proteins, required for microneme secretion and thus merozoite egress from and invasion of host erythrocytes. During gametogenesis, essential for the development of both male and female gametes. Phosphorylates SERA5 p50 which enhances SERA5 p50 protease activity; however, SERA5 p50 protease activity has been shown in other studies to be controversial. Probably by phosphorylating SERA5 p50, plays a role in merozoite egress from host erythrocytes. Probably prior or during merozoite invasion of host erythrocytes, phosphorylates rhoptry protein RhopH3 which is required for RhopH3 localization to rhoptries and for its secretion. Probably in late schizonts, phosphorylates myosin A tail domain-interacting protein MTIP and glideosome-associated protein 45 GAP45, both of which are components of the motor complex that generates the force required by the parasite to invade host cells. In late schizonts, phosphorylates inner membrane complex protein IMC1g. In late schizonts, phosphorylates PKA regulatory subunit PKAr in a calcium-dependent manner, which may contribute to the dissociation of regulatory PKAr and catalytic PKAc subunits and promote the activation of PKAc. May phosphorylate raf kinase inhibitory protein RKIP which in turn may regulate CDPK1 catalytic activity. May phosphorylate proteins of the host erythrocyte membranes. In Plasmodium falciparum (isolate 3D7), this protein is Calcium-dependent protein kinase 1.